A 3093-amino-acid chain; its full sequence is Genome polyprotein (3093 aa).

In terms of domain architecture, Peptidase S30 spans 255 to 403 (KRLLRHVHQA…TTTGERIEYY (149 aa)). Residues histidine 311, aspartate 323, and serine 355 each act as for P1 proteinase activity in the active site. Residues 690 to 809 (HYVPKVGYCY…ASELKEYEIG (120 aa)) form the Peptidase C6 domain. Active-site for helper component proteinase activity residues include cysteine 698 and histidine 769. Residues 1215 to 1366 (RVLADKDNEF…AQKSLDIMTL (152 aa)) form the Helicase ATP-binding domain. 1228 to 1235 (GHVGCGKS) contacts ATP. The short motif at 1316-1319 (DEVH) is the DEVH box element. The region spanning 1367–1546 (PTMTPLDFVK…QVPPVLRNVN (180 aa)) is the Helicase C-terminal domain. The Nuclear localization signal motif lies at 1883–1895 (DKVRKKANVHAMQ). Tyrosine 1915 is modified (O-(5'-phospho-RNA)-tyrosine). Residues 2041-2257 (SKALYGGPRC…VDVGGLYIHN (217 aa)) form the Peptidase C4 domain. Residues histidine 2082, aspartate 2121, and cysteine 2193 each act as for nuclear inclusion protein A activity in the active site. The region spanning 2516–2639 (EWFIDADGSQ…NANEEAKDVV (124 aa)) is the RdRp catalytic domain. Over residues 2800-2826 (NAAATSGATTPAQNVGAGTTTPAKATP) the composition is skewed to low complexity. The tract at residues 2800–2842 (NAAATSGATTPAQNVGAGTTTPAKATPQSGRRPSFGSLIDNPI) is disordered.

Belongs to the potyviridae genome polyprotein family. VPg is uridylylated by the polymerase and is covalently attached to the 5'-end of the genomic RNA. This uridylylated form acts as a nucleotide-peptide primer for the polymerase. Post-translationally, genome polyprotein of potyviruses undergoes post-translational proteolytic processing by the main proteinase NIa-pro resulting in the production of at least ten individual proteins. The P1 proteinase and the HC-pro cleave only their respective C-termini autocatalytically. 6K1 is essential for proper proteolytic separation of P3 from CI.

The protein localises to the host cytoplasmic vesicle. Its subcellular location is the virion. The enzyme catalyses RNA(n) + a ribonucleoside 5'-triphosphate = RNA(n+1) + diphosphate. The catalysed reaction is Hydrolyzes glutaminyl bonds, and activity is further restricted by preferences for the amino acids in P6 - P1' that vary with the species of potyvirus, e.g. Glu-Xaa-Xaa-Tyr-Xaa-Gln-|-(Ser or Gly) for the enzyme from tobacco etch virus. The natural substrate is the viral polyprotein, but other proteins and oligopeptides containing the appropriate consensus sequence are also cleaved.. It carries out the reaction Hydrolyzes a Gly-|-Gly bond at its own C-terminus, commonly in the sequence -Tyr-Xaa-Val-Gly-|-Gly, in the processing of the potyviral polyprotein.. Functionally, required for aphid transmission and also has proteolytic activity. Only cleaves a Gly-Gly dipeptide at its own C-terminus. Interacts with virions and aphid stylets. Acts as a suppressor of RNA-mediated gene silencing, also known as post-transcriptional gene silencing (PTGS), a mechanism of plant viral defense that limits the accumulation of viral RNAs. May have RNA-binding activity. In terms of biological role, has helicase activity. It may be involved in replication. Indispensable for virus replication. Reduces the abundance of host transcripts related to jasmonic acid biosynthesis therefore altering the host defenses. In order to increase its own stability, decreases host protein degradation pathways. Its function is as follows. Indispensable for virus replication. Functionally, mediates the cap-independent, EIF4E-dependent translation of viral genomic RNAs. Binds to the cap-binding site of host EIF4E and thus interferes with the host EIF4E-dependent mRNA export and translation. VPg-RNA directly binds EIF4E and is a template for transcription. Also forms trimeric complexes with EIF4E-EIF4G, which are templates for translation. In terms of biological role, has RNA-binding and proteolytic activities. An RNA-dependent RNA polymerase that plays an essential role in the virus replication. Its function is as follows. Involved in aphid transmission, cell-to-cell and systemis movement, encapsidation of the viral RNA and in the regulation of viral RNA amplification. This chain is Genome polyprotein, found in Brome streak virus (strain 11-Cal) (BStV).